A 303-amino-acid polypeptide reads, in one-letter code: Polyisoprenyl-teichoic acid--peptidoglycan teichoic acid transferase TagU (303 aa).

At 1-4 (MKKK) the chain is on the cytoplasmic side. A helical; Signal-anchor for type II membrane protein membrane pass occupies residues 5 to 25 (ILFWVLGILGVLIIGGGIYAY). Topologically, residues 26–303 (NVYSSVSNTL…KLRTHLEVTK (278 aa)) are extracellular.

This sequence belongs to the LytR/CpsA/Psr (LCP) family.

The protein localises to the cell membrane. It functions in the pathway cell wall biogenesis. Its function is as follows. May catalyze the final step in cell wall teichoic acid biosynthesis, the transfer of the anionic cell wall polymers (APs) from their lipid-linked precursor to the cell wall peptidoglycan (PG). The protein is Polyisoprenyl-teichoic acid--peptidoglycan teichoic acid transferase TagU of Bacillus cereus (strain ZK / E33L).